Reading from the N-terminus, the 1517-residue chain is uncharacterized protein (1517 aa).

The span at 1–13 (MNQFPNQPGNFGQ) shows a compositional bias: polar residues. The tract at residues 1 to 26 (MNQFPNQPGNFGQNYYKPVQGSIPAN) is disordered. N-linked (GlcNAc...) asparagine glycans are attached at residues N35, N40, and N76. The next 5 helical transmembrane spans lie at 231–251 (AIDFVVSLFGCFIAGVVAVPI), 397–417 (AIGLILGVLHTVFSGYTTVWC), 510–530 (FVPLLCLPEHGGMVISMKDWI), 612–632 (PNIVGEIWVDSPSLSGGFFAL), and 720–740 (VFDCSAFDIFVNSEHLPVVLL). Residue N917 is glycosylated (N-linked (GlcNAc...) asparagine). A run of 4 helical transmembrane segments spans residues 956–976 (FVYALYACFYLGLIPIPVPPL), 985–1005 (VPAFLFLIKHYYVSAVLVNSE), 1051–1071 (VKLDPICLDPAFPALVWAFWS), and 1114–1134 (GIGFFHTCLMGVFLGTTTYLL). A glycan (N-linked (GlcNAc...) asparagine) is linked at N1178. Residues 1261–1281 (PYALPLLDSGMVPVSTQLAIV) traverse the membrane as a helical segment. N1321 carries an N-linked (GlcNAc...) asparagine glycan. 2 consecutive transmembrane segments (helical) span residues 1353–1373 (APVVDMQLLYVLGPIGETFEV) and 1408–1428 (VVVVIEALGQDFLAAIVPVVI).

The protein to S.pombe SpAC22F3.04.

The protein localises to the membrane. This is an uncharacterized protein from Schizosaccharomyces pombe (strain 972 / ATCC 24843) (Fission yeast).